The following is a 491-amino-acid chain: Protein nucleotidyltransferase YdiU (491 aa).

G94, G96, R97, K117, D129, G130, R180, and R187 together coordinate ATP. Catalysis depends on D256, which acts as the Proton acceptor. Mg(2+) contacts are provided by N257 and D266. D266 serves as a coordination point for ATP.

This sequence belongs to the SELO family. Mg(2+) is required as a cofactor. It depends on Mn(2+) as a cofactor.

The catalysed reaction is L-seryl-[protein] + ATP = 3-O-(5'-adenylyl)-L-seryl-[protein] + diphosphate. It carries out the reaction L-threonyl-[protein] + ATP = 3-O-(5'-adenylyl)-L-threonyl-[protein] + diphosphate. The enzyme catalyses L-tyrosyl-[protein] + ATP = O-(5'-adenylyl)-L-tyrosyl-[protein] + diphosphate. It catalyses the reaction L-histidyl-[protein] + UTP = N(tele)-(5'-uridylyl)-L-histidyl-[protein] + diphosphate. The catalysed reaction is L-seryl-[protein] + UTP = O-(5'-uridylyl)-L-seryl-[protein] + diphosphate. It carries out the reaction L-tyrosyl-[protein] + UTP = O-(5'-uridylyl)-L-tyrosyl-[protein] + diphosphate. Its function is as follows. Nucleotidyltransferase involved in the post-translational modification of proteins. It can catalyze the addition of adenosine monophosphate (AMP) or uridine monophosphate (UMP) to a protein, resulting in modifications known as AMPylation and UMPylation. This Clostridium botulinum (strain Okra / Type B1) protein is Protein nucleotidyltransferase YdiU.